Reading from the N-terminus, the 640-residue chain is 1-deoxy-D-xylulose-5-phosphate synthase (640 aa).

Residues His-77 and 118–120 (AHA) contribute to the thiamine diphosphate site. Asp-149 provides a ligand contact to Mg(2+). Thiamine diphosphate-binding positions include 150-151 (GS), Asn-178, Tyr-287, and Glu-369. Mg(2+) is bound at residue Asn-178.

This sequence belongs to the transketolase family. DXPS subfamily. As to quaternary structure, homodimer. Mg(2+) is required as a cofactor. Requires thiamine diphosphate as cofactor.

It catalyses the reaction D-glyceraldehyde 3-phosphate + pyruvate + H(+) = 1-deoxy-D-xylulose 5-phosphate + CO2. Its pathway is metabolic intermediate biosynthesis; 1-deoxy-D-xylulose 5-phosphate biosynthesis; 1-deoxy-D-xylulose 5-phosphate from D-glyceraldehyde 3-phosphate and pyruvate: step 1/1. Catalyzes the acyloin condensation reaction between C atoms 2 and 3 of pyruvate and glyceraldehyde 3-phosphate to yield 1-deoxy-D-xylulose-5-phosphate (DXP). The chain is 1-deoxy-D-xylulose-5-phosphate synthase from Caulobacter vibrioides (strain NA1000 / CB15N) (Caulobacter crescentus).